The chain runs to 278 residues: Orotidine 5'-phosphate decarboxylase (278 aa).

K95 acts as the Proton donor in catalysis.

The protein belongs to the OMP decarboxylase family. Type 2 subfamily.

It catalyses the reaction orotidine 5'-phosphate + H(+) = UMP + CO2. It functions in the pathway pyrimidine metabolism; UMP biosynthesis via de novo pathway; UMP from orotate: step 2/2. The protein is Orotidine 5'-phosphate decarboxylase of Mycobacterium marinum (strain ATCC BAA-535 / M).